A 41-amino-acid chain; its full sequence is Large ribosomal subunit protein bL36 (41 aa).

It belongs to the bacterial ribosomal protein bL36 family.

The chain is Large ribosomal subunit protein bL36 from Cereibacter sphaeroides (strain ATCC 17029 / ATH 2.4.9) (Rhodobacter sphaeroides).